Reading from the N-terminus, the 196-residue chain is Imidazoleglycerol-phosphate dehydratase (196 aa).

The protein belongs to the imidazoleglycerol-phosphate dehydratase family.

The protein resides in the cytoplasm. It catalyses the reaction D-erythro-1-(imidazol-4-yl)glycerol 3-phosphate = 3-(imidazol-4-yl)-2-oxopropyl phosphate + H2O. The protein operates within amino-acid biosynthesis; L-histidine biosynthesis; L-histidine from 5-phospho-alpha-D-ribose 1-diphosphate: step 6/9. The polypeptide is Imidazoleglycerol-phosphate dehydratase (Nitratidesulfovibrio vulgaris (strain DSM 19637 / Miyazaki F) (Desulfovibrio vulgaris)).